The primary structure comprises 294 residues: Cytidine deaminase (294 aa).

2 CMP/dCMP-type deaminase domains span residues 48 to 168 (DEDA…FGPK) and 186 to 294 (LTGD…VLLG). 89 to 91 (NME) serves as a coordination point for substrate. Position 102 (His102) interacts with Zn(2+). Residue Glu104 is the Proton donor of the active site. Zn(2+) is bound by residues Cys129 and Cys132.

The protein belongs to the cytidine and deoxycytidylate deaminase family. In terms of assembly, homodimer. The cofactor is Zn(2+).

It carries out the reaction cytidine + H2O + H(+) = uridine + NH4(+). It catalyses the reaction 2'-deoxycytidine + H2O + H(+) = 2'-deoxyuridine + NH4(+). Functionally, this enzyme scavenges exogenous and endogenous cytidine and 2'-deoxycytidine for UMP synthesis. The chain is Cytidine deaminase from Salmonella schwarzengrund (strain CVM19633).